Here is a 573-residue protein sequence, read N- to C-terminus: Leucine aminopeptidase, chloroplastic (573 aa).

The transit peptide at 1–53 (MATLRVSSLLASSPSSLHCNPSVFTKCQSSPRWAFSFSVTPLCSRRSKRIVHC) directs the protein to the chloroplast. 2 residues coordinate Mn(2+): Lys342 and Asp347. Lys354 is a catalytic residue. 3 residues coordinate Mn(2+): Asp367, Asp427, and Glu429. Arg431 is a catalytic residue.

Belongs to the peptidase M17 family. In terms of assembly, homohexamer (dimer of homotrimers). Mn(2+) is required as a cofactor. As to expression, in tubers and floral buds of untreated plants. After abscisic acid (ABA) treatment or mechanical wounding is mostly accumulated in leaves, to a lesser extent in stems, but not in roots.

The protein resides in the plastid. It is found in the chloroplast. The catalysed reaction is Release of an N-terminal amino acid, Xaa-|-Yaa-, in which Xaa is preferably Leu, but may be other amino acids including Pro although not Arg or Lys, and Yaa may be Pro. Amino acid amides and methyl esters are also readily hydrolyzed, but rates on arylamides are exceedingly low.. The enzyme catalyses Release of N-terminal proline from a peptide.. In terms of biological role, presumably involved in the processing and regular turnover of intracellular proteins. The protein is Leucine aminopeptidase, chloroplastic (LAP) of Solanum tuberosum (Potato).